The chain runs to 292 residues: Sulfhydrogenase 1 subunit gamma (292 aa).

An FAD-binding FR-type domain is found at 15-115; it reads YALHRVKVLK…RGPYGNGFPV (101 aa). [2Fe-2S] cluster-binding residues include Cys253, Cys258, Cys261, and Cys273.

As to quaternary structure, heterotetramer of alpha, beta, gamma and delta subunits. The nickel-containing alpha and delta subunits constitute the hydrogenase activity. The beta and gamma subunits (flavin-containing dimer) constitute the sulfur reductase activity. FAD is required as a cofactor. [2Fe-2S] cluster serves as cofactor.

Its subcellular location is the cytoplasm. It carries out the reaction n sulfur + H2 = (n-1) sulfur + hydrogen sulfide + H(+). Its activity is regulated as follows. Stimulated by rubredoxin at pH 7.6 but not ferredoxin. Its function is as follows. Part of a bifunctional enzyme complex that functions as an NADPH-dependent hydrogen-evolving hydrogenase with sulfur reducing activity. May play a role in hydrogen cycling during fermentative growth. Activity not exhibited with NAD. The beta and gamma subunits form the sulfur reducing component that catalyzes the cytoplasmic production of hydrogen sulfide in the presence of elemental sulfur. Not active in the presence of sodium sulfate, sodium sulfite, sodium thiosulfate or cysteine. The polypeptide is Sulfhydrogenase 1 subunit gamma (Pyrococcus furiosus (strain ATCC 43587 / DSM 3638 / JCM 8422 / Vc1)).